Here is a 1583-residue protein sequence, read N- to C-terminus: Protein mesh (1583 aa).

An N-terminal signal peptide occupies residues 1–21; that stretch reads MGVKIKLVLAVVLILSANVLG. Topologically, residues 22–1182 are extracellular; the sequence is QDEIVNDTES…EFSQRALFLT (1161 aa). An NIDO domain is found at 260-415; sequence GIYFRLDRDL…GRHIFRIDEN (156 aa). One can recognise an AMOP domain in the interval 647–798; that stretch reads GQRWSNSMCN…VGCETFRFER (152 aa). The region spanning 811–1019 is the VWFD domain; that stretch reads GVAGIFGDPH…HWQLTDREQR (209 aa). In terms of domain architecture, Sushi spans 1110–1170; it reads ISCGILETPR…PDYGYTECLR (61 aa). Intrachain disulfides connect C1112/C1152 and C1138/C1168. A helical transmembrane segment spans residues 1183–1203; that stretch reads WGVIVAVILPLGLLICLLWFW. At 1204 to 1472 the chain is on the cytoplasmic side; sequence CWHKPRSEGK…QEYSSRTLGA (269 aa). Residues 1232–1250 show a composition bias toward polar residues; the sequence is LRSSSMGNITDTMKSSTIP. Residues 1232–1448 are disordered; sequence LRSSSMGNIT…IPEAPKSAPV (217 aa). Residues 1291 to 1300 are compositionally biased toward basic and acidic residues; the sequence is GKSDSGKSDK. Residues 1405-1416 show a composition bias toward polar residues; sequence PIPSQYSPTYSE. The chain crosses the membrane as a helical span at residues 1473-1493; it reads TWGIISAVMLPIIIILICVAW. Residues 1494-1583 lie on the Extracellular side of the membrane; it reads RILQRRKAEE…RQWGGETEIN (90 aa). The segment covering 1521–1539 has biased composition (basic and acidic residues); the sequence is DSVKVTSDDESIPYKKDVT. The interval 1521–1583 is disordered; the sequence is DSVKVTSDDE…RQWGGETEIN (63 aa).

As to expression, in fifth instar larvae, expressed in midgut epithelial cells (at protein level).

It is found in the membrane. The protein resides in the cell junction. The protein localises to the septate junction. Its subcellular location is the lateral cell membrane. Functionally, may be required for the proper organization of smooth septate junctions and for the barrier function of the midgut epithelium. The protein is Protein mesh of Bombyx mori (Silk moth).